Consider the following 274-residue polypeptide: MSVQSKIKRVTVPEIRARKGAEPIVSLTAYHAHTARYIDPYVDFLLVGDSLGMVMYGMETTLGVTLDMMIAHGAAVVRGTERALVVVDMPFGSYEESPEIAFRNACRVIKETGCTAVKLEGGTRIAETIRYLTLRGIPVMAHIGLTPQNIQVMGGFKTQGREEGEWAAIEADAKAVAEAGAFAVVLEGMAEPLAARITGQIDIPTIGIGASPNCDGQILVLEDMLGLSPRPAKFVREFATLGAQIAGAAEAYARAVRERSFPAAEHTYSMKKAK.

The Mg(2+) site is built by Asp-49 and Asp-88. 3-methyl-2-oxobutanoate is bound by residues 49–50 (DS), Asp-88, and Lys-118. Glu-120 contributes to the Mg(2+) binding site. Glu-187 acts as the Proton acceptor in catalysis.

The protein belongs to the PanB family. In terms of assembly, homodecamer; pentamer of dimers. Mg(2+) serves as cofactor.

Its subcellular location is the cytoplasm. It carries out the reaction 3-methyl-2-oxobutanoate + (6R)-5,10-methylene-5,6,7,8-tetrahydrofolate + H2O = 2-dehydropantoate + (6S)-5,6,7,8-tetrahydrofolate. It participates in cofactor biosynthesis; (R)-pantothenate biosynthesis; (R)-pantoate from 3-methyl-2-oxobutanoate: step 1/2. Catalyzes the reversible reaction in which hydroxymethyl group from 5,10-methylenetetrahydrofolate is transferred onto alpha-ketoisovalerate to form ketopantoate. This Parvibaculum lavamentivorans (strain DS-1 / DSM 13023 / NCIMB 13966) protein is 3-methyl-2-oxobutanoate hydroxymethyltransferase.